A 232-amino-acid polypeptide reads, in one-letter code: tRNA (guanine-N(7)-)-methyltransferase (232 aa).

Residues glutamate 63, glutamate 88, aspartate 115, and aspartate 137 each contribute to the S-adenosyl-L-methionine site. Aspartate 137 is a catalytic residue. Residues lysine 141, aspartate 173, and 211–214 (TRYE) each bind substrate.

Belongs to the class I-like SAM-binding methyltransferase superfamily. TrmB family.

It carries out the reaction guanosine(46) in tRNA + S-adenosyl-L-methionine = N(7)-methylguanosine(46) in tRNA + S-adenosyl-L-homocysteine. It participates in tRNA modification; N(7)-methylguanine-tRNA biosynthesis. Functionally, catalyzes the formation of N(7)-methylguanine at position 46 (m7G46) in tRNA. This Agrobacterium fabrum (strain C58 / ATCC 33970) (Agrobacterium tumefaciens (strain C58)) protein is tRNA (guanine-N(7)-)-methyltransferase.